The sequence spans 119 residues: MSLRLGAISSCTTSSPFPVLQVLLPLSLLLTTLVPATMGAAKIEGRMAHVELRCLCLNTVSGIHPSNIQSLEVIRAGAHCAKVEVIATLKNDKKICLDPEAPRIKKIVQKIMEDGGSAA.

The N-terminal stretch at 1-33 is a signal peptide; it reads MSLRLGAISSCTTSSPFPVLQVLLPLSLLLTTL. Positions 34–39 are excised as a propeptide; that stretch reads VPATMG. Cystine bridges form between cysteine 54–cysteine 80 and cysteine 56–cysteine 96.

Its subcellular location is the secreted. Functionally, chemoattractant factor for neutrophils. The polypeptide is Platelet basic protein (PPBP) (Sus scrofa (Pig)).